The following is a 265-amino-acid chain: Adenosine 5'-phosphosulfate reductase (265 aa).

[4Fe-4S] cluster contacts are provided by Cys135, Cys136, Cys218, and Cys221. The Nucleophile; cysteine thiosulfonate intermediate role is filled by Cys246.

This sequence belongs to the PAPS reductase family. CysH subfamily. [4Fe-4S] cluster is required as a cofactor.

The protein localises to the cytoplasm. It carries out the reaction [thioredoxin]-disulfide + sulfite + AMP + 2 H(+) = adenosine 5'-phosphosulfate + [thioredoxin]-dithiol. It functions in the pathway sulfur metabolism; hydrogen sulfide biosynthesis; sulfite from sulfate. In terms of biological role, catalyzes the formation of sulfite from adenosine 5'-phosphosulfate (APS) using thioredoxin as an electron donor. The polypeptide is Adenosine 5'-phosphosulfate reductase (Rhizobium meliloti (strain 1021) (Ensifer meliloti)).